The primary structure comprises 279 residues: 3-methyl-2-oxobutanoate hydroxymethyltransferase (279 aa).

Residues Asp-44 and Asp-83 each coordinate Mg(2+). 3-methyl-2-oxobutanoate-binding positions include 44-45 (DS), Asp-83, and Lys-113. Mg(2+) is bound at residue Glu-115. Catalysis depends on Glu-182, which acts as the Proton acceptor.

This sequence belongs to the PanB family. In terms of assembly, homodecamer; pentamer of dimers. The cofactor is Mg(2+).

Its subcellular location is the cytoplasm. The catalysed reaction is 3-methyl-2-oxobutanoate + (6R)-5,10-methylene-5,6,7,8-tetrahydrofolate + H2O = 2-dehydropantoate + (6S)-5,6,7,8-tetrahydrofolate. The protein operates within cofactor biosynthesis; (R)-pantothenate biosynthesis; (R)-pantoate from 3-methyl-2-oxobutanoate: step 1/2. Its function is as follows. Catalyzes the reversible reaction in which hydroxymethyl group from 5,10-methylenetetrahydrofolate is transferred onto alpha-ketoisovalerate to form ketopantoate. The polypeptide is 3-methyl-2-oxobutanoate hydroxymethyltransferase (Dehalococcoides mccartyi (strain ATCC BAA-2100 / JCM 16839 / KCTC 5957 / BAV1)).